Reading from the N-terminus, the 895-residue chain is Endochitinase 2 (895 aa).

The first 22 residues, Met-1–Ala-22, serve as a signal peptide directing secretion. Residues Ser-29–Cys-340 enclose the GH18 domain. The N-linked (GlcNAc...) asparagine glycan is linked to Asn-90. Glu-175 functions as the Proton donor in the catalytic mechanism. The segment at Asp-343–Arg-712 is disordered. The segment covering Thr-346–Thr-425 has biased composition (low complexity). The span at Val-426–Pro-478 shows a compositional bias: polar residues. Residues Ser-479–Thr-505 show a composition bias toward low complexity. Over residues Lys-506–Asp-543 the composition is skewed to polar residues. Over residues Ser-544–Ser-555 the composition is skewed to low complexity. Positions Ala-556–Pro-577 are enriched in polar residues. Over residues Thr-578–Ser-589 the composition is skewed to low complexity. Over residues Met-590–His-657 the composition is skewed to polar residues. Low complexity-rich tracts occupy residues Ser-658–Thr-692 and Thr-699–Arg-712. Gly-866 is lipidated: GPI-anchor amidated glycine. A propeptide spans Gly-867–Leu-895 (removed in mature form).

Belongs to the glycosyl hydrolase 18 family. Chitinase class III subfamily.

It is found in the cell membrane. The enzyme catalyses Random endo-hydrolysis of N-acetyl-beta-D-glucosaminide (1-&gt;4)-beta-linkages in chitin and chitodextrins.. Functionally, may be associated with endosporulation. This Coccidioides immitis (strain RS) (Valley fever fungus) protein is Endochitinase 2 (CTS2).